A 215-amino-acid polypeptide reads, in one-letter code: UPF0056 membrane protein bbp_248 (215 aa).

Transmembrane regions (helical) follow at residues 10–32 (IYIS…PIFT), 52–74 (FSVA…LFGI), 78–100 (SFRI…GNFI), 119–141 (ISIV…TIVW), 151–169 (IFGC…WTLF), and 190–207 (IMGL…LAGL).

This sequence belongs to the UPF0056 (MarC) family.

It is found in the cell membrane. In Buchnera aphidicola subsp. Baizongia pistaciae (strain Bp), this protein is UPF0056 membrane protein bbp_248.